A 363-amino-acid polypeptide reads, in one-letter code: NADH-quinone oxidoreductase subunit H (363 aa).

10 helical membrane passes run Val-29–Trp-49, Gly-62–Phe-82, Phe-96–Phe-116, Val-127–Gly-147, Ala-163–Ala-183, Phe-202–Val-222, Ile-239–Leu-257, Ile-264–Val-286, Thr-299–Phe-319, and Phe-339–Ile-359.

It belongs to the complex I subunit 1 family. As to quaternary structure, NDH-1 is composed of 14 different subunits. Subunits NuoA, H, J, K, L, M, N constitute the membrane sector of the complex.

It is found in the cell inner membrane. It carries out the reaction a quinone + NADH + 5 H(+)(in) = a quinol + NAD(+) + 4 H(+)(out). NDH-1 shuttles electrons from NADH, via FMN and iron-sulfur (Fe-S) centers, to quinones in the respiratory chain. The immediate electron acceptor for the enzyme in this species is believed to be ubiquinone. Couples the redox reaction to proton translocation (for every two electrons transferred, four hydrogen ions are translocated across the cytoplasmic membrane), and thus conserves the redox energy in a proton gradient. This subunit may bind ubiquinone. The sequence is that of NADH-quinone oxidoreductase subunit H from Xanthomonas campestris pv. campestris (strain B100).